The following is a 466-amino-acid chain: 3-isopropylmalate dehydratase large subunit (466 aa).

Residues Cys-347, Cys-407, and Cys-410 each coordinate [4Fe-4S] cluster.

The protein belongs to the aconitase/IPM isomerase family. LeuC type 1 subfamily. As to quaternary structure, heterodimer of LeuC and LeuD. [4Fe-4S] cluster is required as a cofactor.

It catalyses the reaction (2R,3S)-3-isopropylmalate = (2S)-2-isopropylmalate. Its pathway is amino-acid biosynthesis; L-leucine biosynthesis; L-leucine from 3-methyl-2-oxobutanoate: step 2/4. Catalyzes the isomerization between 2-isopropylmalate and 3-isopropylmalate, via the formation of 2-isopropylmaleate. The sequence is that of 3-isopropylmalate dehydratase large subunit from Klebsiella pneumoniae subsp. pneumoniae (strain ATCC 700721 / MGH 78578).